The sequence spans 232 residues: Small ribosomal subunit protein uS3 (232 aa).

Positions valine 39–arginine 107 constitute a KH type-2 domain.

This sequence belongs to the universal ribosomal protein uS3 family. As to quaternary structure, part of the 30S ribosomal subunit. Forms a tight complex with proteins S10 and S14.

Binds the lower part of the 30S subunit head. Binds mRNA in the 70S ribosome, positioning it for translation. In Pseudoalteromonas atlantica (strain T6c / ATCC BAA-1087), this protein is Small ribosomal subunit protein uS3.